Here is a 622-residue protein sequence, read N- to C-terminus: Low affinity potassium transport system protein Kup (622 aa).

12 consecutive transmembrane segments (helical) span residues 9-29 (LPAV…TSPL), 52-72 (FLSL…LLFV), 99-119 (TPVL…EVVI), 137-157 (PSLQ…LFFI), 165-185 (VGKL…VLGV), 213-233 (VSFF…ALYA), 247-267 (WFSA…ALLL), 276-296 (PFFL…ATLA), 337-357 (IYIP…IVSF), 363-383 (LAAA…ILSC), 394-414 (LLIV…MFAA), and 419-439 (IFSG…AMIT).

Belongs to the HAK/KUP transporter (TC 2.A.72) family.

Its subcellular location is the cell inner membrane. The catalysed reaction is K(+)(in) + H(+)(in) = K(+)(out) + H(+)(out). Responsible for the low-affinity transport of potassium into the cell. Likely operates as a K(+):H(+) symporter. The sequence is that of Low affinity potassium transport system protein Kup from Sodalis glossinidius (strain morsitans).